The chain runs to 159 residues: uncharacterized protein (159 aa).

This is an uncharacterized protein from Acanthamoeba polyphaga (Amoeba).